We begin with the raw amino-acid sequence, 303 residues long: MDLILLIGIATALLIILLTLYFLQKRNAPAETKAAAQPQRGVPLRAQEGVPRRAQIARNQRNRLRANQNAPDAVAPVAAAPAAAIDPDGDEDGDENGPRVPQGAVLDEKMGAKKRAKMEAKEQKRLQREQELHDREQRKVKEAKEEAERKQQDDLDAEVERKRVEAERVVKELHERKEHEMYLKMKATFSVEEEGFEEDDADDKEADFIQYIKDNKVVLLEDLATTFKLKTQQAIERIQELQAEDTITGVIDDRGKFIYVSEAELAAVAKFIKQRGRVSIADLAESSNNLINLTPVTASEGGA.

Residues 1–2 (MD) are Lumenal-facing. Residues 3-23 (LILLIGIATALLIILLTLYFL) form a helical membrane-spanning segment. Over 24–303 (QKRNAPAETK…TPVTASEGGA (280 aa)) the chain is Cytoplasmic. 2 disordered regions span residues 31–53 (ETKA…VPRR) and 84–160 (AIDP…AEVE). The segment covering 106-160 (LDEKMGAKKRAKMEAKEQKRLQREQELHDREQRKVKEAKEEAERKQQDDLDAEVE) has biased composition (basic and acidic residues).

Belongs to the DDRGK1 family. Interacts with Atg9; the interaction is transient.

It is found in the endoplasmic reticulum membrane. Functionally, substrate adapter for ufmylation, the covalent attachment of the ubiquitin-like modifier UFM1 to substrate proteins. Required for ufmylation of Atg9; protects the nervous system during aging, possibly by stabilizing Atg9 and supporting its function. The polypeptide is DDRGK domain-containing protein 1 (Drosophila grimshawi (Hawaiian fruit fly)).